A 205-amino-acid polypeptide reads, in one-letter code: Ribonuclease HII (205 aa).

One can recognise an RNase H type-2 domain in the interval 16 to 205 (VSEVGIDEVG…KSFLKKSNLF (190 aa)). A divalent metal cation-binding residues include aspartate 22, glutamate 23, and aspartate 118.

The protein belongs to the RNase HII family. The cofactor is Mn(2+). Mg(2+) serves as cofactor.

Its subcellular location is the cytoplasm. It catalyses the reaction Endonucleolytic cleavage to 5'-phosphomonoester.. Its function is as follows. Endonuclease that specifically degrades the RNA of RNA-DNA hybrids. The protein is Ribonuclease HII of Prochlorococcus marinus (strain MIT 9215).